The sequence spans 355 residues: UDP-N-acetylglucosamine--N-acetylmuramyl-(pentapeptide) pyrophosphoryl-undecaprenol N-acetylglucosamine transferase (355 aa).

UDP-N-acetyl-alpha-D-glucosamine-binding positions include 15–17, N127, R163, S191, I244, 263–268, and Q288; these read TGG and ALTVSE.

Belongs to the glycosyltransferase 28 family. MurG subfamily.

It localises to the cell inner membrane. The enzyme catalyses di-trans,octa-cis-undecaprenyl diphospho-N-acetyl-alpha-D-muramoyl-L-alanyl-D-glutamyl-meso-2,6-diaminopimeloyl-D-alanyl-D-alanine + UDP-N-acetyl-alpha-D-glucosamine = di-trans,octa-cis-undecaprenyl diphospho-[N-acetyl-alpha-D-glucosaminyl-(1-&gt;4)]-N-acetyl-alpha-D-muramoyl-L-alanyl-D-glutamyl-meso-2,6-diaminopimeloyl-D-alanyl-D-alanine + UDP + H(+). It participates in cell wall biogenesis; peptidoglycan biosynthesis. Functionally, cell wall formation. Catalyzes the transfer of a GlcNAc subunit on undecaprenyl-pyrophosphoryl-MurNAc-pentapeptide (lipid intermediate I) to form undecaprenyl-pyrophosphoryl-MurNAc-(pentapeptide)GlcNAc (lipid intermediate II). This is UDP-N-acetylglucosamine--N-acetylmuramyl-(pentapeptide) pyrophosphoryl-undecaprenol N-acetylglucosamine transferase from Salmonella typhi.